We begin with the raw amino-acid sequence, 610 residues long: MILTLAYFMLGTLLLGVFAEDTVSQIGINDSLWYPYDEALVLKPLPNNDLLLSFAFQLQSEPFDPAVSSMSYDAYEHYTTFPRAIPPLLESTATRQFHLRFTRGFWDALSWGQLPHAGKEAGASGVELWSQVQAMDQEQAFHNWKKLSNSLSGLFCSSLNFIDESRTTFPRRSYASDIGAPLFNSTEKLYLMRASLPNEPICTENLTPFIKLLPTRGKSGLTSLLDGHKLFDSLWNSISLDIATICSEDEDALCHYEMDARIEMVTHVPSALARGERPIPKPLDGNTLRCDTDKPFDSYQCFPLPEPSQTHFKLSQLFARPINNGNLFANRPTRICAEVDRSTWTAFLSVDDTIFSTHDNCFDLSNDQNEGGSGYDFILESTDTTKVTPIVPVPIHVSRSLTGNGQDRGGMRIVFHNDNDTPVKLIYFESLPWFMRVYLSSLQITSTTSPQLQENDIILDKYYLQAADRKRPGHLEFTMLIPANTDIVMTYQFDKALLQFAEYPPDANHGFEIDAAVITVLSLESSSSLYEMRTSTLLLSLSTPDFSMPYNVIILTSTIMGLIFGMLYNLMVKRMVTVEEADKITLQSGLKYKLLKLKEKFLGKKKTKTD.

The first 19 residues, 1–19, serve as a signal peptide directing secretion; that stretch reads MILTLAYFMLGTLLLGVFA. Topologically, residues 20–551 are lumenal; sequence EDTVSQIGIN…STPDFSMPYN (532 aa). Asparagine 184 is a glycosylation site (N-linked (GlcNAc...) asparagine). The helical transmembrane segment at 552 to 572 threads the bilayer; it reads VIILTSTIMGLIFGMLYNLMV. Residues 573 to 610 lie on the Cytoplasmic side of the membrane; that stretch reads KRMVTVEEADKITLQSGLKYKLLKLKEKFLGKKKTKTD.

It belongs to the PIGT family. In terms of assembly, forms a complex with CDC91, GPI17, GPI8 and GAA1. In terms of processing, the disulfide bond between GPI8 and GPI16 is important for normal enzyme activity.

Its subcellular location is the endoplasmic reticulum membrane. It participates in glycolipid biosynthesis; glycosylphosphatidylinositol-anchor biosynthesis. Its function is as follows. Component of the GPI transamidase complex. Involved in transfer of GPI to proteins. The protein is GPI transamidase component GPI16 (GPI16) of Saccharomyces cerevisiae (strain ATCC 204508 / S288c) (Baker's yeast).